The following is a 750-amino-acid chain: E3 ubiquitin-protein ligase rfwd3.S (750 aa).

The disordered stretch occupies residues 92 to 206 (RQAAEQRSSV…GAAPPAEPAP (115 aa)). Basic residues predominate over residues 105–116 (RVQRRSTRRHQR). Over residues 122-144 (TAGTSSRAALSNFFQINRTQGVA) the composition is skewed to polar residues. The span at 168–181 (SSDETVELSEEEEG) shows a compositional bias: acidic residues. The segment at 263–307 (CAICFEPWTNAGQHRLSALRCGHLFGFTCIERWLKGGAAKCPQCN) adopts an RING-type; degenerate zinc-finger fold. The segment covering 387-405 (TSMQASSSRSTISGSLSSS) has biased composition (low complexity). Residues 387-406 (TSMQASSSRSTISGSLSSSQ) are disordered. WD repeat units follow at residues 470 to 510 (IHSK…VVQT), 512 to 552 (NTGR…NCVQ), and 558 to 603 (GSRC…YRPH).

It depends on [4Fe-4S] cluster as a cofactor.

It localises to the nucleus. The protein localises to the PML body. The protein resides in the cytoplasm. The enzyme catalyses S-ubiquitinyl-[E2 ubiquitin-conjugating enzyme]-L-cysteine + [acceptor protein]-L-lysine = [E2 ubiquitin-conjugating enzyme]-L-cysteine + N(6)-ubiquitinyl-[acceptor protein]-L-lysine.. The protein operates within protein modification; protein ubiquitination. E3 ubiquitin-protein ligase required for the repair of DNA interstrand cross-links (ICL) in response to DNA damage. Plays a key role in RPA-mediated DNA damage signaling and repair. Required to translesion DNA synthesis across DNA-protein cross-link adducts by catalyzing ubiquitination of proteins on single-stranded DNA (ssDNA). Mediates ubiquitination of the hmces DNA-protein cross-link, possibly promoting its degradation. This chain is E3 ubiquitin-protein ligase rfwd3.S (rfwd3.S), found in Xenopus laevis (African clawed frog).